A 283-amino-acid chain; its full sequence is MAEHLASIFGTEKDRVNCPFYFKIGACRHGDRCSRLHNRPTISPTLLLSNMYQRPDMITPGVDPQGQPLDPSKIQDHFEDFYEDIFEELNKFGEVESLNVCDNLADHMIGNVYVLFKEEDHAAAALQALQGRFYSGRPIIADFSPVTDFREATCRQYEENSCNRGGYCNFMHVKQISRELRRKLFGRYRRSYRRGSRSRSRSISPRRKREHSRERERGDVRDRDRHGNGKRSSDRSERHDRDGGGRRRHGSPKRSRSPRNVREGSEERRARIEQWNRERDEGV.

Residues glutamate 12 to proline 40 form a C3H1-type 1 zinc finger. Residues proline 44–valine 146 form the RRM domain. The C3H1-type 2 zinc-finger motif lies at aspartate 148–glutamine 175. Residues serine 191–glutamate 210 are compositionally biased toward basic residues. Residues serine 191–valine 283 are disordered. Residues histidine 211–glycine 245 show a composition bias toward basic and acidic residues. Basic residues predominate over residues arginine 246–arginine 259. Residues asparagine 260 to valine 283 are compositionally biased toward basic and acidic residues.

It belongs to the splicing factor SR family. Component of the spliceosome. Homo- and heterodimer. Interacts with RNU1, U2AF35A and SR45.

The protein localises to the nucleus speckle. Its function is as follows. Necessary for the splicing of pre-mRNA. Probably active at the 3' splice sites. This is Splicing factor U2af small subunit B (U2AF35B) from Arabidopsis thaliana (Mouse-ear cress).